An 890-amino-acid chain; its full sequence is Pentatricopeptide repeat-containing protein At3g57430, chloroplastic (890 aa).

Residues 1–44 (MSCPLAFTFSLPSIFPFPSQLLPFSRHKHPYLLRATPTSATEDV) constitute a chloroplast transit peptide. PPR repeat units lie at residues 61–95 (SPEW…GIKP), 96–130 (DNYA…GYGV), 132–162 (SVTV…ISER), 163–197 (NQVS…NVEP), 198–231 (SSFT…GLRK), 235–265 (NSFI…FGGR), 266–300 (DLVT…GVEP), 301–335 (DEFT…GSLD), 337–371 (NSFV…KIGL), 372–398 (WNAM…MEES), 404–438 (NSTT…GLDR), 439–473 (DRFV…DLVT), 474–504 (WNTM…ERKV), 516–550 (NSIT…NLAT), 551–581 (DVAV…IPQK), 582–616 (NVIT…GVKP), 617–652 (NEVT…GVEP), and 653–683 (SSDH…MPRD). The segment at 689–764 (AWSSLLGASR…EPGCSWIEHG (76 aa)) is type E motif. Residues 765–795 (DEVHKFVAGDSSHPQSEKLSGYLETLWERMR) form a type E(+) motif region. The type DYW motif stretch occupies residues 796-890 (KEGYVPDTSC…NGTCSCGDYW (95 aa)).

It belongs to the PPR family. PCMP-H subfamily.

Its subcellular location is the plastid. The protein localises to the chloroplast. In terms of biological role, involved in RNA editing events in chloroplasts. Required for the editing of a single site in ndhB and ndhF transcripts, which are two plastid-encoded subunits of the chloroplast NAD(P)H dehydrogenase (NDH) complex. Required for the editing of a single site in psbZ. Required for optimal activity of the NDH complex of the photosynthetic electron transport chain. The chain is Pentatricopeptide repeat-containing protein At3g57430, chloroplastic (PCMP-H81) from Arabidopsis thaliana (Mouse-ear cress).